The following is a 517-amino-acid chain: Protein translocase subunit SecD (517 aa).

6 consecutive transmembrane segments (helical) span residues 5–25 (LRWI…FPLD), 357–377 (IWAG…YYKF), 380–400 (FIAS…MGMF), 407–427 (PGIA…VLIF), 455–475 (IIDS…FGTG), and 479–499 (GFAV…VTLS).

The protein belongs to the SecD/SecF family. SecD subfamily. As to quaternary structure, forms a complex with SecF. Part of the essential Sec protein translocation apparatus which comprises SecA, SecYEG and auxiliary proteins SecDF. Other proteins may also be involved.

Its subcellular location is the cell inner membrane. Its function is as follows. Part of the Sec protein translocase complex. Interacts with the SecYEG preprotein conducting channel. SecDF uses the proton motive force (PMF) to complete protein translocation after the ATP-dependent function of SecA. This is Protein translocase subunit SecD from Calditerrivibrio nitroreducens (strain DSM 19672 / NBRC 101217 / Yu37-1).